Here is a 185-residue protein sequence, read N- to C-terminus: Translation initiation factor IF-3 (185 aa).

Belongs to the IF-3 family. As to quaternary structure, monomer.

It is found in the cytoplasm. Its function is as follows. IF-3 binds to the 30S ribosomal subunit and shifts the equilibrium between 70S ribosomes and their 50S and 30S subunits in favor of the free subunits, thus enhancing the availability of 30S subunits on which protein synthesis initiation begins. This chain is Translation initiation factor IF-3, found in Rickettsia prowazekii (strain Madrid E).